The chain runs to 619 residues: ESX-2 secretion system protein EccA2 (619 aa).

Gly373–Thr380 contributes to the ATP binding site.

The protein belongs to the CbxX/CfxQ family. Part of the ESX-2 / type VII secretion system (T7SS), which is composed of cytosolic and membrane components.

It localises to the cytoplasm. In terms of biological role, part of an ESX-2 / type VII specialized secretion system (T7SS), which exports several proteins. May have ATPase activity and might provide energy for the export of ESX-2 substrates. This Mycobacterium bovis (strain ATCC BAA-935 / AF2122/97) protein is ESX-2 secretion system protein EccA2.